Reading from the N-terminus, the 357-residue chain is Phenylalanine--tRNA ligase alpha subunit (357 aa).

E257 lines the Mg(2+) pocket.

Belongs to the class-II aminoacyl-tRNA synthetase family. Phe-tRNA synthetase alpha subunit type 1 subfamily. Tetramer of two alpha and two beta subunits. Mg(2+) is required as a cofactor.

It is found in the cytoplasm. The catalysed reaction is tRNA(Phe) + L-phenylalanine + ATP = L-phenylalanyl-tRNA(Phe) + AMP + diphosphate + H(+). In Ruegeria pomeroyi (strain ATCC 700808 / DSM 15171 / DSS-3) (Silicibacter pomeroyi), this protein is Phenylalanine--tRNA ligase alpha subunit.